The primary structure comprises 270 residues: 3-methyl-2-oxobutanoate hydroxymethyltransferase (270 aa).

Mg(2+)-binding residues include aspartate 50 and aspartate 89. 3-methyl-2-oxobutanoate is bound by residues 50–51 (DS), aspartate 89, and lysine 118. Glutamate 120 is a Mg(2+) binding site. Glutamate 187 serves as the catalytic Proton acceptor.

This sequence belongs to the PanB family. Homodecamer; pentamer of dimers. The cofactor is Mg(2+).

The protein resides in the cytoplasm. It carries out the reaction 3-methyl-2-oxobutanoate + (6R)-5,10-methylene-5,6,7,8-tetrahydrofolate + H2O = 2-dehydropantoate + (6S)-5,6,7,8-tetrahydrofolate. The protein operates within cofactor biosynthesis; (R)-pantothenate biosynthesis; (R)-pantoate from 3-methyl-2-oxobutanoate: step 1/2. Its function is as follows. Catalyzes the reversible reaction in which hydroxymethyl group from 5,10-methylenetetrahydrofolate is transferred onto alpha-ketoisovalerate to form ketopantoate. In Helicobacter pylori (strain ATCC 700392 / 26695) (Campylobacter pylori), this protein is 3-methyl-2-oxobutanoate hydroxymethyltransferase.